Consider the following 167-residue polypeptide: Acetolactate synthase small subunit (167 aa).

The 75-residue stretch at 7–81 folds into the ACT domain; it reads TLSVLVEAKP…NVIKIVELED (75 aa).

This sequence belongs to the acetolactate synthase small subunit family. In terms of assembly, dimer of large and small chains.

It catalyses the reaction 2 pyruvate + H(+) = (2S)-2-acetolactate + CO2. The protein operates within amino-acid biosynthesis; L-isoleucine biosynthesis; L-isoleucine from 2-oxobutanoate: step 1/4. Its pathway is amino-acid biosynthesis; L-valine biosynthesis; L-valine from pyruvate: step 1/4. This Mycobacterium avium protein is Acetolactate synthase small subunit (ilvH).